The chain runs to 150 residues: Histone H2B.2 (150 aa).

Residues 1–16 (MAPKAEKKPAAKKPAE) show a composition bias toward basic and acidic residues. The segment at 1 to 57 (MAPKAEKKPAAKKPAEEEPAAEKAPAGKKPKAEKRVPAGKSAGKEGGEGKRGRKKGK) is disordered. Residues lysine 7 and lysine 34 each carry the N6-acetyllysine modification. A Glycyl lysine isopeptide (Lys-Gly) (interchain with G-Cter in ubiquitin) cross-link involves residue lysine 146.

It belongs to the histone H2B family. As to quaternary structure, the nucleosome is a histone octamer containing two molecules each of H2A, H2B, H3 and H4 assembled in one H3-H4 heterotetramer and two H2A-H2B heterodimers. The octamer wraps approximately 147 bp of DNA. Can be acetylated to form H2BK6ac and H2BK33ac. In terms of processing, monoubiquitinated to form H2BK143ub1; may give a specific tag for epigenetic transcriptional activation.

The protein resides in the nucleus. The protein localises to the chromosome. Core component of nucleosome. Nucleosomes wrap and compact DNA into chromatin, limiting DNA accessibility to the cellular machineries which require DNA as a template. Histones thereby play a central role in transcription regulation, DNA repair, DNA replication and chromosomal stability. DNA accessibility is regulated via a complex set of post-translational modifications of histones, also called histone code, and nucleosome remodeling. In Zea mays (Maize), this protein is Histone H2B.2.